A 597-amino-acid chain; its full sequence is Elongation factor 4 (597 aa).

A tr-type G domain is found at lysine 2–glutamate 184. GTP contacts are provided by residues aspartate 14–threonine 19 and asparagine 131–aspartate 134.

This sequence belongs to the TRAFAC class translation factor GTPase superfamily. Classic translation factor GTPase family. LepA subfamily.

Its subcellular location is the cell inner membrane. It carries out the reaction GTP + H2O = GDP + phosphate + H(+). In terms of biological role, required for accurate and efficient protein synthesis under certain stress conditions. May act as a fidelity factor of the translation reaction, by catalyzing a one-codon backward translocation of tRNAs on improperly translocated ribosomes. Back-translocation proceeds from a post-translocation (POST) complex to a pre-translocation (PRE) complex, thus giving elongation factor G a second chance to translocate the tRNAs correctly. Binds to ribosomes in a GTP-dependent manner. This is Elongation factor 4 from Vibrio parahaemolyticus serotype O3:K6 (strain RIMD 2210633).